The following is a 238-amino-acid chain: Ribonuclease PH (238 aa).

Phosphate-binding positions include Arg-86 and 124–126 (GTR).

The protein belongs to the RNase PH family. In terms of assembly, homohexameric ring arranged as a trimer of dimers.

It carries out the reaction tRNA(n+1) + phosphate = tRNA(n) + a ribonucleoside 5'-diphosphate. Phosphorolytic 3'-5' exoribonuclease that plays an important role in tRNA 3'-end maturation. Removes nucleotide residues following the 3'-CCA terminus of tRNAs; can also add nucleotides to the ends of RNA molecules by using nucleoside diphosphates as substrates, but this may not be physiologically important. Probably plays a role in initiation of 16S rRNA degradation (leading to ribosome degradation) during starvation. This is Ribonuclease PH from Chromobacterium violaceum (strain ATCC 12472 / DSM 30191 / JCM 1249 / CCUG 213 / NBRC 12614 / NCIMB 9131 / NCTC 9757 / MK).